Here is a 307-residue protein sequence, read N- to C-terminus: N-acetylmuramic acid 6-phosphate etherase (307 aa).

The SIS domain maps to 60-223 (AAQAIARGGR…STGAMVRIGK (164 aa)). Residue Glu-88 is the Proton donor of the active site. Glu-119 is a catalytic residue.

This sequence belongs to the GCKR-like family. MurNAc-6-P etherase subfamily. Homodimer.

The enzyme catalyses N-acetyl-D-muramate 6-phosphate + H2O = N-acetyl-D-glucosamine 6-phosphate + (R)-lactate. The protein operates within amino-sugar metabolism; N-acetylmuramate degradation. Its function is as follows. Specifically catalyzes the cleavage of the D-lactyl ether substituent of MurNAc 6-phosphate, producing GlcNAc 6-phosphate and D-lactate. In Synechococcus elongatus (strain ATCC 33912 / PCC 7942 / FACHB-805) (Anacystis nidulans R2), this protein is N-acetylmuramic acid 6-phosphate etherase.